The following is a 289-amino-acid chain: Homoserine kinase (289 aa).

79–89 contributes to the ATP binding site; that stretch reads PLARGLGSSSS.

The protein belongs to the GHMP kinase family. Homoserine kinase subfamily.

The protein localises to the cytoplasm. It catalyses the reaction L-homoserine + ATP = O-phospho-L-homoserine + ADP + H(+). The protein operates within amino-acid biosynthesis; L-threonine biosynthesis; L-threonine from L-aspartate: step 4/5. Functionally, catalyzes the ATP-dependent phosphorylation of L-homoserine to L-homoserine phosphate. This chain is Homoserine kinase, found in Streptococcus pneumoniae serotype 2 (strain D39 / NCTC 7466).